We begin with the raw amino-acid sequence, 226 residues long: MATTNNKNLTITEKVYVRVRLANEADISHIYKLFYQIHEYHNYTHLYKATESSLCDLLFKANPNPLFYGPSVLLLEVSPTPFENTKKDEKFKPVLKTFDLRATVEDKEAEEFKSKSCGDEKEDVFIAGYAFFYANYSCFYDKAGIYFESLYFRESYRKLGMGSLLFGTVASIAANNGFASVEGIVAVWNKKSYDFYVNMGVEIFDEFRYGKLVGDALQKYADKEKA.

The tract at residues 29–45 is important in binding site and for catalytic activity; the sequence is HIYKLFYQIHEYHNYTH. Positions 72-222 constitute an N-acetyltransferase domain; it reads VLLLEVSPTP…VGDALQKYAD (151 aa).

Belongs to the acetyltransferase family. In terms of assembly, homodimer.

The protein resides in the cytoplasm. The enzyme catalyses tyramine + (E)-feruloyl-CoA = N-[(E)-feruloyl]tyramine + CoA + H(+). Inhibited by (2-hydroxyphenyl)amino sulfinyl acetic acid 1,1-dimethylethyl ester, by DEPC and by N-ethylmaleimide. Synthesizes amides which are involved in stress response in the cell wall. Catalyzes the synthesis of hydroxycinnamic acid amides from hydroxycinnamoyl-CoA thioesters and various hydroxyphenylethylamines such as 4-coumaroyl-CoA and sinapoyl-CoA. The sequence is that of Tyramine N-feruloyltransferase 4/11 (THT4) from Nicotiana tabacum (Common tobacco).